Here is a 107-residue protein sequence, read N- to C-terminus: EPIDERMAL PATTERNING FACTOR-like protein 3 (107 aa).

Residues 1-24 form the signal peptide; it reads MEYMFLLMSKFFFVFPIIIYIGPA. Cystine bridges form between Cys-64–Cys-102, Cys-68–Cys-74, and Cys-71–Cys-104.

This sequence belongs to the plant cysteine rich small secretory peptide family. Epidermal patterning factor subfamily.

The protein resides in the secreted. Functionally, controls stomatal patterning. In Arabidopsis thaliana (Mouse-ear cress), this protein is EPIDERMAL PATTERNING FACTOR-like protein 3.